The sequence spans 1094 residues: Protein phosphatase 2C and cyclic nucleotide-binding/kinase domain-containing protein (1094 aa).

One can recognise a PPM-type phosphatase domain in the interval 107-397 (RCSFLSQRGY…DDITIIVVHI (291 aa)). Mn(2+) contacts are provided by Asp148, Gly149, Asp344, and Asp388. Residues 491 to 616 (LFRK…RSVD) and 617 to 758 (LLSR…RHSS) contribute to the a nucleoside 3',5'-cyclic phosphate site. Residues 785-1038 (TTCLSTTDCS…PESIKKHPWF (254 aa)) enclose the Protein kinase domain. Residues 791–799 (TDCSEIGLV) and Lys811 each bind ATP.

This sequence in the N-terminal section; belongs to the PP2C family. It in the C-terminal section; belongs to the protein kinase superfamily. AGC Ser/Thr protein kinase family. The cofactor is Mg(2+). Requires Mn(2+) as cofactor.

The catalysed reaction is O-phospho-L-seryl-[protein] + H2O = L-seryl-[protein] + phosphate. The enzyme catalyses O-phospho-L-threonyl-[protein] + H2O = L-threonyl-[protein] + phosphate. This is Protein phosphatase 2C and cyclic nucleotide-binding/kinase domain-containing protein from Arabidopsis thaliana (Mouse-ear cress).